A 311-amino-acid chain; its full sequence is tRNA dimethylallyltransferase (311 aa).

12–19 (GPTASGKT) contacts ATP. Position 14-19 (14-19 (TASGKT)) interacts with substrate. Interaction with substrate tRNA regions lie at residues 37–40 (DSAM) and 161–165 (QRIQR).

This sequence belongs to the IPP transferase family. Monomer. The cofactor is Mg(2+).

The catalysed reaction is adenosine(37) in tRNA + dimethylallyl diphosphate = N(6)-dimethylallyladenosine(37) in tRNA + diphosphate. In terms of biological role, catalyzes the transfer of a dimethylallyl group onto the adenine at position 37 in tRNAs that read codons beginning with uridine, leading to the formation of N6-(dimethylallyl)adenosine (i(6)A). The protein is tRNA dimethylallyltransferase of Coxiella burnetii (strain RSA 331 / Henzerling II).